The chain runs to 393 residues: Cytochrome b (393 aa).

Helical transmembrane passes span 32–52 (FGSL…FLAM), 76–98 (WLIR…LHIG), 113–133 (LWSI…LGYV), and 179–199 (FFSL…MHLL). Positions 82 and 96 each coordinate heme b. 2 residues coordinate heme b: His-183 and His-197. His-202 is an a ubiquinone binding site. A run of 4 helical transmembrane segments spans residues 225–245 (FTFK…LFVF), 289–309 (LIGV…PILD), 321–341 (LMRF…FIGS), and 348–368 (YVEI…VVVP).

This sequence belongs to the cytochrome b family. In terms of assembly, fungal cytochrome b-c1 complex contains 10 subunits; 3 respiratory subunits, 2 core proteins and 5 low-molecular weight proteins. Cytochrome b-c1 complex is a homodimer. Requires heme b as cofactor.

Its subcellular location is the mitochondrion inner membrane. In terms of biological role, component of the ubiquinol-cytochrome c reductase complex (complex III or cytochrome b-c1 complex) that is part of the mitochondrial respiratory chain. The b-c1 complex mediates electron transfer from ubiquinol to cytochrome c. Contributes to the generation of a proton gradient across the mitochondrial membrane that is then used for ATP synthesis. The chain is Cytochrome b (COB) from Mycosarcoma maydis (Corn smut fungus).